We begin with the raw amino-acid sequence, 338 residues long: Lipopolysaccharide 1,2-glucosyltransferase (338 aa).

Residues 33 to 38 and 130 to 131 each bind UDP; these read GVDANY and DA. 2 residues coordinate Mg(2+): Asp130 and Asp132. 2 consecutive short sequence motifs (DXD) follow at residues 130 to 132 and 215 to 217; these read DAD and DQD. His264 serves as a coordination point for Mg(2+). 264-270 lines the UDP pocket; sequence HYTGATK.

Belongs to the glycosyltransferase 8 family. The cofactor is Mg(2+).

The protein resides in the cell inner membrane. It carries out the reaction UDP-glucose + [lipopolysaccharide] = UDP + D-glucosyl-[lipopolysaccharide].. The catalysed reaction is alpha-D-Glc-(1-&gt;3)-[alpha-D-Gal-(1-&gt;6)]-alpha-D-Glc-(1-&gt;3)-[L-alpha-D-Hep-(1-&gt;7)]-4-O-PO3(2-)-L-alpha-D-Hep-(1-&gt;3)-4-O-PO3(2-)-L-alpha-D-Hep-(1-&gt;5)-[alpha-Kdo-(2-&gt;4)]-alpha-Kdo-(2-&gt;6)-lipid A + UDP-alpha-D-glucose = alpha-D-Glc-(1-&gt;2)-alpha-D-Glc-(1-&gt;3)-[alpha-D-Gal-(1-&gt;6)]-alpha-D-Glc-(1-&gt;3)-[L-alpha-D-Hep-(1-&gt;7)]-4-O-PO3(2-)-L-alpha-D-Hep-(1-&gt;3)-4-O-PO3(2-)-L-alpha-D-Hep-(1-&gt;5)-[alpha-Kdo-(2-&gt;4)]-alpha-Kdo-(2-&gt;6)-lipid A + UDP + H(+). Its pathway is bacterial outer membrane biogenesis; LPS core biosynthesis. In terms of biological role, glucosyltransferase involved in the biosynthesis of the core oligosaccharide region of lipopolysaccharide (LPS). Catalyzes the addition of a glucose (glucose III) to the outer-core glucose II. This chain is Lipopolysaccharide 1,2-glucosyltransferase, found in Escherichia coli (strain K12).